Reading from the N-terminus, the 207-residue chain is Abscisic acid receptor PYL4 (207 aa).

Positions 45 to 195 (HEVGPNQCCS…NLQSLAKIAE (151 aa)) are START-like. Cys52 and Cys176 form a disulfide bridge. Abscisate contacts are provided by residues Lys81, 111–116 (AASSTE), 138–144 (RLSNYRS), and Glu160. The Gate loop signature appears at 107–111 (SGLPA). The Latch loop signature appears at 137 to 139 (HRL).

It belongs to the PYR/PYL/RCAR abscisic acid intracellular receptor family. In terms of assembly, monomer. Homodimer. Binds ABA on one subunit only. Interacts with HAB1, ABI1 and ABI2, and possibly with other PP2Cs. Binds to CARs protein in an ABA-independent manner, both at the plasma membrane and in the nucleus. Interacts directly with CAR1 and CAR4. Interacts with TOPP1. Interacts with DDA1. Interacts with FREE1 (via N-terminus). Interacts with the E3 ubiquitin-protein ligase RSL1 at the plasma membrane. Post-translationally, ubiquitynated and degraded by the proteasome upon binding to the E3 ubiquitin-protein ligase RSL1 at the plasma membrane.

The protein localises to the cytoplasm. The protein resides in the nucleus. Its subcellular location is the cell membrane. It is found in the vacuole. Receptor for abscisic acid (ABA) required for ABA-mediated responses such as stomatal closure and germination inhibition. Inhibits the activity of group-A protein phosphatases type 2C (PP2Cs) when activated by ABA. Can be activated by both (-)-ABA and (+)-ABA. In Arabidopsis thaliana (Mouse-ear cress), this protein is Abscisic acid receptor PYL4.